Here is a 1077-residue protein sequence, read N- to C-terminus: Ubiquitin carboxyl-terminal hydrolase 28 (1077 aa).

Residues 60-80 are disordered; the sequence is DERVKEPSQDTVATEPSEVEG. Ser-67 carries the phosphoserine modification. The 20-residue stretch at 97–116 folds into the UIM domain; it reads DNKDDLQAAIALSLLESPKI. A Glycyl lysine isopeptide (Lys-Gly) (interchain with G-Cter in SUMO2) cross-link involves residue Lys-99. The USP domain maps to 162–650; it reads VGLKNVGNTC…SAYCLMYIND (489 aa). Cys-171 acts as the Nucleophile in catalysis. Ser-375 carries the phosphoserine modification. The tract at residues 477 to 535 is disordered; sequence HCSVSDQTSKESTSTESSSQDVESTFSSPEDSLPKSKPLTSSRSSMEMPSQPAPRTVTD. Low complexity predominate over residues 481 to 501; that stretch reads SDQTSKESTSTESSSQDVEST. Polar residues predominate over residues 514–524; that stretch reads PLTSSRSSMEM. Ser-550 carries the phosphoserine modification. His-600 acts as the Proton acceptor in catalysis. The tract at residues 697–728 is disordered; that stretch reads EEQSCKIPQMESSTNSSSQDYSTSQEPSVASS. The span at 707–724 shows a compositional bias: low complexity; that stretch reads ESSTNSSSQDYSTSQEPS. At Ser-714 the chain carries Phosphoserine. Residue Lys-759 forms a Glycyl lysine isopeptide (Lys-Gly) (interchain with G-Cter in SUMO2) linkage. Thr-1048 carries the phosphothreonine modification.

Belongs to the peptidase C19 family. USP28 subfamily. In terms of assembly, interacts with ZNF304. Interacts with PRKD1. Interacts with TP53BP1. Interacts with isoform 1 of FBXW7; following DNA damage, dissociates from FBXW7 leading to degradation of MYC. Post-translationally, degraded upon nickel ion level or hypoxia exposure. Phosphorylated upon DNA damage at Ser-67 and Ser-714, by ATM or ATR. Phosphorylated by PRKD1.

Its subcellular location is the nucleus. It is found in the nucleoplasm. The enzyme catalyses Thiol-dependent hydrolysis of ester, thioester, amide, peptide and isopeptide bonds formed by the C-terminal Gly of ubiquitin (a 76-residue protein attached to proteins as an intracellular targeting signal).. Its function is as follows. Deubiquitinase involved in DNA damage response checkpoint and MYC proto-oncogene stability. Involved in DNA damage induced apoptosis by specifically deubiquitinating proteins of the DNA damage pathway such as CLSPN. Also involved in G2 DNA damage checkpoint, by deubiquitinating CLSPN, and preventing its degradation by the anaphase promoting complex/cyclosome (APC/C). In contrast, it does not deubiquitinate PLK1. Specifically deubiquitinates MYC in the nucleoplasm, leading to prevent MYC degradation by the proteasome: acts by specifically interacting with isoform 1 of FBXW7 (FBW7alpha) in the nucleoplasm and counteracting ubiquitination of MYC by the SCF(FBW7) complex. In contrast, it does not interact with isoform 4 of FBXW7 (FBW7gamma) in the nucleolus, allowing MYC degradation and explaining the selective MYC degradation in the nucleolus. Deubiquitinates ZNF304, hence preventing ZNF304 degradation by the proteasome and leading to the activated KRAS-mediated promoter hypermethylation and transcriptional silencing of tumor suppressor genes (TSGs) in a subset of colorectal cancers (CRC) cells. The sequence is that of Ubiquitin carboxyl-terminal hydrolase 28 (USP28) from Homo sapiens (Human).